A 648-amino-acid chain; its full sequence is Probable alpha-galactosidase D (648 aa).

Positions 1–17 (MESIVWLLLLSPALVAG) are cleaved as a signal peptide. Residues N84 and N90 are each glycosylated (N-linked (GlcNAc...) asparagine). An intrachain disulfide couples C123 to C156. The active-site Nucleophile is the D154. Substrate is bound at residue 199–203 (EWGID). The Proton donor role is filled by D221. 3 N-linked (GlcNAc...) asparagine glycosylation sites follow: N339, N505, and N572.

It belongs to the glycosyl hydrolase 27 family.

It localises to the secreted. It carries out the reaction Hydrolysis of terminal, non-reducing alpha-D-galactose residues in alpha-D-galactosides, including galactose oligosaccharides, galactomannans and galactolipids.. Functionally, hydrolyzes a variety of simple alpha-D-galactoside as well as more complex molecules such as oligosaccharides and polysaccharides. In Neosartorya fischeri (strain ATCC 1020 / DSM 3700 / CBS 544.65 / FGSC A1164 / JCM 1740 / NRRL 181 / WB 181) (Aspergillus fischerianus), this protein is Probable alpha-galactosidase D (aglD).